Consider the following 739-residue polypeptide: Xylosyl- and glucuronyltransferase LARGE2s (739 aa).

Over 1–10 (MLCSWRVKLK) the chain is Cytoplasmic. The chain crosses the membrane as a helical; Signal-anchor for type II membrane protein span at residues 11–31 (LLLATITLAVLLSWLYLFVGS). At 32 to 739 (LEYGRFLLLP…LKYLTAERNL (708 aa)) the chain is on the lumenal side. The segment at 80 to 105 (AEGSDGNPQWAASAEDGPPLGGERNN) is disordered. 3 N-linked (GlcNAc...) asparagine glycosylation sites follow: N105, N131, and N217. Positions 121–396 (LHVAIVCAGH…FLEYDGNLLR (276 aa)) are xylosyltransferase activity. D225 and D227 together coordinate Mn(2+). N255 is a glycosylation site (N-linked (GlcNAc...) asparagine). Positions 397-739 (RELFGCASLP…LKYLTAERNL (343 aa)) are glucuronyltransferase activity. D546 and D548 together coordinate Mn(2+).

It in the C-terminal section; belongs to the glycosyltransferase 49 family. The protein in the N-terminal section; belongs to the glycosyltransferase 8 family. Mn(2+) is required as a cofactor.

It localises to the golgi apparatus membrane. The catalysed reaction is 3-O-[beta-D-GlcA-(1-&gt;3)-beta-D-Xyl-(1-&gt;4)-Rib-ol-P-Rib-ol-P-3-beta-D-GalNAc-(1-&gt;3)-beta-D-GlcNAc-(1-&gt;4)-(O-6-P-alpha-D-Man)]-Thr-[protein] + UDP-alpha-D-xylose = 3-O-[alpha-D-Xyl-(1-&gt;3)-beta-D-GlcA-(1-&gt;4)-beta-D-Xyl-(1-&gt;4)-Rib-ol-P-Rib-ol-P-3-beta-D-GalNAc-(1-&gt;3)-beta-D-GlcNAc-(1-&gt;4)-(O-6-P-alpha-D-Man)]-Thr-[protein] + UDP + H(+). The enzyme catalyses 3-O-{(1-&gt;[3)-alpha-D-Xyl-(1-&gt;3)-beta-D-GlcA-(1-&gt;](n)-4)-beta-D-Xyl-(1-&gt;4)-Rib-ol-P-Rib-ol-P-3-beta-D-GalNAc-(1-&gt;3)-beta-D-GlcNAc-(1-&gt;4)-O-6-P-alpha-D-Man}-L-Thr-[protein] + UDP-alpha-D-glucuronate = 3-O-{beta-D-GlcA-(1-&gt;[3)-alpha-D-Xyl-(1-&gt;3)-beta-D-GlcA-(1-&gt;](n)-4)-beta-D-Xyl-(1-&gt;4)-Rib-ol-P-Rib-ol-P-3-beta-D-GalNAc-(1-&gt;3)-beta-D-GlcNAc-(1-&gt;4)-O-6-P-alpha-D-Man}-L-Thr-[protein] + UDP + H(+). It carries out the reaction 3-O-{beta-D-GlcA-(1-&gt;[3)-alpha-D-Xyl-(1-&gt;3)-beta-D-GlcA-(1-&gt;](n)-4)-beta-D-Xyl-(1-&gt;4)-Rib-ol-P-Rib-ol-P-3-beta-D-GalNAc-(1-&gt;3)-beta-D-GlcNAc-(1-&gt;4)-O-6-P-alpha-D-Man}-L-Thr-[protein] + UDP-alpha-D-xylose = 3-O-{(1-&gt;[3)-alpha-D-Xyl-(1-&gt;3)-beta-D-GlcA-(1-&gt;](n+1)-4)-beta-D-Xyl-(1-&gt;4)-Rib-ol-P-Rib-ol-P-3-beta-D-GalNAc-(1-&gt;3)-beta-D-GlcNAc-(1-&gt;4)-O-6-P-alpha-D-Man}-L-Thr-[protein] + UDP + H(+). It participates in protein modification; protein glycosylation. Bifunctional glycosyltransferase with both alpha-1,3-xylosyltransferase and beta-1,3-glucuronyltransferase activities involved in the maturation of alpha-dystroglycan (DAG1) by glycosylation leading to DAG1 binding to laminin G-like domain-containing extracellular proteins with high affinity and in a phosphorylated-O-mannosyl trisaccharide dependent manner. Elongates the glucuronyl-beta-1,4-xylose-beta disaccharide primer structure by adding repeating units [-3-Xylose-alpha-1,3-GlcA-beta-1-] to produce a heteropolysaccharide. Supports the maturation of DAG1 more effectively than LARGE1. In addition, can modify both heparan sulfate (HS)- and chondroitin/dermatan sulfate (CS/DS)-proteoglycans (PGs), namely GPC4, with a glycosaminoglycan (GAG)-like polysaccharide composed of xylose and glucuronic acid to confer laminin binding. This chain is Xylosyl- and glucuronyltransferase LARGE2s, found in Gallus gallus (Chicken).